The chain runs to 232 residues: Adenosylcobinamide-GDP ribazoletransferase (232 aa).

6 consecutive transmembrane segments (helical) span residues 32–52, 54–74, 102–122, 126–146, 172–192, and 212–232; these read PIYFPLVGYIPGILFFFGGSF, NFLLKILFLILGYYFFDLFHF, VGPFAVFFGTLYVVVFWTLYL, PITFIYSSVFGRYSMNLLMFF, FFLLPLLFSMKYFFISYVVTV, and DVLGGACLMTNGLLLVVLGVV.

The protein belongs to the CobS family. Mg(2+) serves as cofactor.

Its subcellular location is the cell inner membrane. It carries out the reaction alpha-ribazole + adenosylcob(III)inamide-GDP = adenosylcob(III)alamin + GMP + H(+). It catalyses the reaction alpha-ribazole 5'-phosphate + adenosylcob(III)inamide-GDP = adenosylcob(III)alamin 5'-phosphate + GMP + H(+). It participates in cofactor biosynthesis; adenosylcobalamin biosynthesis; adenosylcobalamin from cob(II)yrinate a,c-diamide: step 7/7. Functionally, joins adenosylcobinamide-GDP and alpha-ribazole to generate adenosylcobalamin (Ado-cobalamin). Also synthesizes adenosylcobalamin 5'-phosphate from adenosylcobinamide-GDP and alpha-ribazole 5'-phosphate. This Thermosipho melanesiensis (strain DSM 12029 / CIP 104789 / BI429) protein is Adenosylcobinamide-GDP ribazoletransferase.